The following is a 129-amino-acid chain: Glutaredoxin-like protein ECU08_1380 (129 aa).

In terms of domain architecture, Glutaredoxin spans 26 to 126; sequence EADYGEMVRR…PLLTQNREPV (101 aa).

It belongs to the glutaredoxin family.

It localises to the cytoplasm. Functionally, has a glutathione-disulfide oxidoreductase activity in the presence of NADPH and glutathione reductase. Reduces low molecular weight disulfides and proteins. The protein is Glutaredoxin-like protein ECU08_1380 of Encephalitozoon cuniculi (strain GB-M1) (Microsporidian parasite).